Here is a 141-residue protein sequence, read N- to C-terminus: ATP synthase epsilon chain (141 aa).

It belongs to the ATPase epsilon chain family. F-type ATPases have 2 components, CF(1) - the catalytic core - and CF(0) - the membrane proton channel. CF(1) has five subunits: alpha(3), beta(3), gamma(1), delta(1), epsilon(1). CF(0) has three main subunits: a, b and c.

It localises to the cell inner membrane. Its function is as follows. Produces ATP from ADP in the presence of a proton gradient across the membrane. The protein is ATP synthase epsilon chain of Burkholderia ambifaria (strain ATCC BAA-244 / DSM 16087 / CCUG 44356 / LMG 19182 / AMMD) (Burkholderia cepacia (strain AMMD)).